Consider the following 176-residue polypeptide: 2-C-methyl-D-erythritol 2,4-cyclodiphosphate synthase (176 aa).

Positions 23, 25, and 60 each coordinate a divalent metal cation. 23–25 (DSH) is a binding site for 4-CDP-2-C-methyl-D-erythritol 2-phosphate. 149 to 152 (TSGE) is a 4-CDP-2-C-methyl-D-erythritol 2-phosphate binding site.

Belongs to the IspF family. Homotrimer. A divalent metal cation is required as a cofactor.

The catalysed reaction is 4-CDP-2-C-methyl-D-erythritol 2-phosphate = 2-C-methyl-D-erythritol 2,4-cyclic diphosphate + CMP. It functions in the pathway isoprenoid biosynthesis; isopentenyl diphosphate biosynthesis via DXP pathway; isopentenyl diphosphate from 1-deoxy-D-xylulose 5-phosphate: step 4/6. Involved in the biosynthesis of isopentenyl diphosphate (IPP) and dimethylallyl diphosphate (DMAPP), two major building blocks of isoprenoid compounds. Catalyzes the conversion of 4-diphosphocytidyl-2-C-methyl-D-erythritol 2-phosphate (CDP-ME2P) to 2-C-methyl-D-erythritol 2,4-cyclodiphosphate (ME-CPP) with a corresponding release of cytidine 5-monophosphate (CMP). The sequence is that of 2-C-methyl-D-erythritol 2,4-cyclodiphosphate synthase from Chlamydia abortus (strain DSM 27085 / S26/3) (Chlamydophila abortus).